A 282-amino-acid chain; its full sequence is Bifunctional protein FolD (282 aa).

Residues 164–166 (GRS) and serine 189 each bind NADP(+).

The protein belongs to the tetrahydrofolate dehydrogenase/cyclohydrolase family. In terms of assembly, homodimer.

It carries out the reaction (6R)-5,10-methylene-5,6,7,8-tetrahydrofolate + NADP(+) = (6R)-5,10-methenyltetrahydrofolate + NADPH. The enzyme catalyses (6R)-5,10-methenyltetrahydrofolate + H2O = (6R)-10-formyltetrahydrofolate + H(+). It functions in the pathway one-carbon metabolism; tetrahydrofolate interconversion. Catalyzes the oxidation of 5,10-methylenetetrahydrofolate to 5,10-methenyltetrahydrofolate and then the hydrolysis of 5,10-methenyltetrahydrofolate to 10-formyltetrahydrofolate. This is Bifunctional protein FolD from Lactobacillus helveticus (strain DPC 4571).